A 207-amino-acid chain; its full sequence is Outer-membrane lipoprotein carrier protein (207 aa).

Residues 1-21 (MRAIRMLLVSALAMGAVSAHA) form the signal peptide.

This sequence belongs to the LolA family. Monomer.

Its subcellular location is the periplasm. Its function is as follows. Participates in the translocation of lipoproteins from the inner membrane to the outer membrane. Only forms a complex with a lipoprotein if the residue after the N-terminal Cys is not an aspartate (The Asp acts as a targeting signal to indicate that the lipoprotein should stay in the inner membrane). The protein is Outer-membrane lipoprotein carrier protein of Pseudomonas entomophila (strain L48).